A 349-amino-acid polypeptide reads, in one-letter code: 3-isopropylmalate dehydrogenase (349 aa).

The substrate site is built by Arg91, Arg101, Arg129, and Asp219. The Mg(2+) site is built by Asp219, Asp243, and Asp247. 277–289 (GSAPDIAGLGKAN) serves as a coordination point for NAD(+).

This sequence belongs to the isocitrate and isopropylmalate dehydrogenases family. LeuB type 1 subfamily. In terms of assembly, homodimer. Mg(2+) is required as a cofactor. It depends on Mn(2+) as a cofactor.

The protein localises to the cytoplasm. It catalyses the reaction (2R,3S)-3-isopropylmalate + NAD(+) = 4-methyl-2-oxopentanoate + CO2 + NADH. Its pathway is amino-acid biosynthesis; L-leucine biosynthesis; L-leucine from 3-methyl-2-oxobutanoate: step 3/4. Its function is as follows. Catalyzes the oxidation of 3-carboxy-2-hydroxy-4-methylpentanoate (3-isopropylmalate) to 3-carboxy-4-methyl-2-oxopentanoate. The product decarboxylates to 4-methyl-2 oxopentanoate. This Zymomonas mobilis subsp. mobilis (strain ATCC 31821 / ZM4 / CP4) protein is 3-isopropylmalate dehydrogenase.